The chain runs to 192 residues: Mitochondrial import inner membrane translocase subunit TIM18 (192 aa).

Residues 1 to 42 (MLLFPGLKPVLNASTVIVNPVRAVFPGLVLSTKRSFYSINRL) constitute a mitochondrion transit peptide. Topologically, residues 43 to 88 (NAENKINDIANTSKEASSSVQMFKPPEFSQFKDSYQKDYERIAKYT) are mitochondrial matrix. The chain crosses the membrane as a helical span at residues 89-109 (LIPLTMVPFYASFTGGVINPL). Over 110 to 113 (LDAS) the chain is Mitochondrial intermembrane. The chain crosses the membrane as a helical span at residues 114 to 134 (LSSIFLIYLQYGFTSCIIDYI). Topologically, residues 135–144 (PKEKYPRWHK) are mitochondrial matrix. The chain crosses the membrane as a helical span at residues 145–165 (LALYCLYGGSMLSLYGIYELE). The Mitochondrial intermembrane segment spans residues 166–192 (TKNNGFVDLVKKLWNENDDHLYIFGRN).

The protein belongs to the CybS family. Component of the TIM22 complex, whose core is composed of TIM18, TIM22 and TIM54, associated with the peripheral proteins MRS5/TIM12 and the 70 kDa heterohexamer composed of TIM9 and TIM10 (or TIM8 and TIM13).

Its subcellular location is the mitochondrion inner membrane. In terms of biological role, component of the TIM22 complex, a complex that mediates the import and insertion of multi-pass transmembrane proteins into the mitochondrial inner membrane. The TIM22 complex forms a twin-pore translocase that uses the membrane potential as external driving force. Its role in the complex is unclear but it may be involved in the assembly and stabilization of the TIM22 complex. In Saccharomyces cerevisiae (strain ATCC 204508 / S288c) (Baker's yeast), this protein is Mitochondrial import inner membrane translocase subunit TIM18 (TIM18).